Reading from the N-terminus, the 359-residue chain is Cyclin puc1 (359 aa).

The protein belongs to the cyclin family.

Its function is as follows. Function in exit from the mitotic cycle. Contributes to negative regulation of the timing of sexual development in fission yeast, and functions at the transition between cycling and non-cycling cells. Interacts with protein kinase A. The polypeptide is Cyclin puc1 (puc1) (Schizosaccharomyces pombe (strain 972 / ATCC 24843) (Fission yeast)).